The following is a 423-amino-acid chain: Osteomodulin (423 aa).

An N-terminal signal peptide occupies residues 1 to 20 (MGCLRPIYVLFFCFVVRVYG). A sulfotyrosine mark is found at Tyr-22, Tyr-25, Tyr-31, Tyr-39, Tyr-51, and Tyr-77. An LRRNT domain is found at 53–91 (APFYQNILGCAKECFCPTNFPTSMYCDNRKLKTIPDIPM). 11 LRR repeats span residues 92-113 (HIQQLNLQFNDIEAVTADSFIN), 116-129 (HLKEINLSHNKIKS), 142-164 (NLQQLHLDHNNLEEFPFPLPKSL), 165-184 (ERLLLGYNEISTLPTHAMDG), 187-207 (NVTMLDLCYNHLSDSTLKGKI), 213-233 (KLMQLNLCNNRLESMPPGLPL), 234-255 (SLMYLSLENNSISSIPEDYFQK), 258-279 (KLHALRISHNKLEDIPYDIFNL), 281-294 (NLIELNVGHNKLKQ), 301-322 (NLEHLYLQNNEIQSINVTMMCP), and 331-353 (HLTYLRVDQNKLKEPISSYIFFC). N-linked (GlcNAc...) asparagine glycans are attached at residues Asn-113 and Asn-121. Asn-187 is a glycosylation site (N-linked (GlcNAc...) asparagine). N-linked (GlcNAc...) asparagine glycans are attached at residues Asn-242 and Asn-278. N-linked (GlcNAc...) asparagine glycosylation is present at Asn-316. Residues Cys-321 and Cys-353 are joined by a disulfide bond. Residues 383 to 408 (YQDEEEEEEDDSQDHTLEGQEETEEH) are disordered. The segment covering 385–394 (DEEEEEEDDS) has biased composition (acidic residues). Tyr-413 and Tyr-414 each carry sulfotyrosine.

The protein belongs to the small leucine-rich proteoglycan (SLRP) family. SLRP class II subfamily. In terms of assembly, binds the alpha(V)beta(3)-integrin. Post-translationally, glycosylated; contains keratan sulfate. In terms of tissue distribution, osteoblast and odontoblast. Expressed in femoral bone and calvaria tissues. Detected in femoral head, rib, tendon and bone marrow.

Its subcellular location is the secreted. The protein resides in the extracellular space. The protein localises to the extracellular matrix. Its function is as follows. May be implicated in biomineralization processes. Has a function in binding of osteoblasts via the alpha(V)beta(3)-integrin. The protein is Osteomodulin (Omd) of Rattus norvegicus (Rat).